A 141-amino-acid polypeptide reads, in one-letter code: Nucleoside diphosphate kinase (141 aa).

ATP is bound by residues K11, F59, R87, T93, R104, and N114. H117 (pros-phosphohistidine intermediate) is an active-site residue.

Belongs to the NDK family. Homotetramer. Mg(2+) serves as cofactor.

Its subcellular location is the cytoplasm. The enzyme catalyses a 2'-deoxyribonucleoside 5'-diphosphate + ATP = a 2'-deoxyribonucleoside 5'-triphosphate + ADP. It catalyses the reaction a ribonucleoside 5'-diphosphate + ATP = a ribonucleoside 5'-triphosphate + ADP. Functionally, major role in the synthesis of nucleoside triphosphates other than ATP. The ATP gamma phosphate is transferred to the NDP beta phosphate via a ping-pong mechanism, using a phosphorylated active-site intermediate. The sequence is that of Nucleoside diphosphate kinase from Pseudomonas putida (strain ATCC 47054 / DSM 6125 / CFBP 8728 / NCIMB 11950 / KT2440).